The following is a 612-amino-acid chain: Actin-binding LIM protein 2 (612 aa).

4 consecutive LIM zinc-binding domains span residues Ile-22–Thr-81, Thr-81–Gly-141, Arg-151–Ile-210, and Ile-210–Glu-270. 8 residues coordinate Zn(2+): Cys-83, Cys-86, His-103, Cys-106, Cys-109, Cys-112, Cys-131, and Cys-134. Zn(2+) is bound by residues Cys-212, Cys-215, His-232, Cys-235, Cys-238, Cys-241, His-260, and Cys-263. The span at Thr-269–Thr-278 shows a compositional bias: basic and acidic residues. Disordered regions lie at residues Thr-269–Pro-295 and Ala-341–Tyr-433. Composition is skewed to low complexity over residues Ser-279–Pro-295 and Ser-364–Ser-373. Phosphoserine occurs at positions 282, 294, 365, and 368. Positions Ser-394–Gln-416 are enriched in polar residues. Ser-453 bears the Phosphoserine mark. The interval Ala-471–Arg-520 is disordered. Thr-473 carries the post-translational modification Phosphothreonine. Ser-477 and Ser-579 each carry phosphoserine. Residues Ser-477–Ser-489 show a composition bias toward low complexity. One can recognise an HP domain in the interval Thr-544 to Phe-612.

As to quaternary structure, interacts with F-actin and ABRA.

It is found in the cytoplasm. May act as scaffold protein. May stimulate ABRA activity and ABRA-dependent SRF transcriptional activity. The sequence is that of Actin-binding LIM protein 2 (Ablim2) from Rattus norvegicus (Rat).